The sequence spans 487 residues: Serralysin (487 aa).

Positions 1 to 16 (MQSTKKAIEITESNFA) are excised as a propeptide. Position 192 (H192) interacts with Zn(2+). E193 is an active-site residue. Positions 196, 202, and 232 each coordinate Zn(2+). Residues R269, G271, T273, D301, G303, G304, D306, T343, E345, G350, G352, D354, N359, A361, N363, G367, G368, A369, D372, G376, G377, G378, G379, D381, G385, G386, A387, G388, D390, D399, D406, and D416 each contribute to the Ca(2+) site. Hemolysin-type calcium-binding repeat units lie at residues 348-365 (IGGS…NNVL) and 366-383 (KGGA…ADEL).

Belongs to the peptidase M10B family. It depends on Ca(2+) as a cofactor. The cofactor is Zn(2+).

Its subcellular location is the secreted. It carries out the reaction Preferential cleavage of bonds with hydrophobic residues in P1'.. Naturally present in the silkworm intestine and allows the emerging moth to dissolve its cocoon. This is Serralysin from Serratia marcescens (strain ATCC 21074 / E-15).